A 299-amino-acid polypeptide reads, in one-letter code: Taste receptor type 2 member 4 (299 aa).

At 1 to 9 the chain is on the extracellular side; it reads MLRLFYFSA. A helical membrane pass occupies residues 10-30; it reads IIASVILNFVGIIMNLFITVV. Residues 31–46 are Cytoplasmic-facing; it reads NCKTWVKSHRISSSDR. Residues 47–67 traverse the membrane as a helical segment; sequence ILFSLGITRFLMLGLFLVNTI. The Extracellular portion of the chain corresponds to 68 to 81; sequence YFVSSNXERSVYLS. The helical transmembrane segment at 82 to 102 threads the bilayer; that stretch reads AFFVLCFMFLDSSSLWFVTLL. Over 103–131 the chain is Cytoplasmic; the sequence is NILYCVKITNFQHSVFLLLKRNISPKIPR. A helical transmembrane segment spans residues 132 to 152; sequence LLLACVLISAFTTCLYITLSQ. At 153–172 the chain is on the extracellular side; sequence ASPFPELVTTRNNTSFNINE. Residues asparagine 164 and asparagine 165 are each glycosylated (N-linked (GlcNAc...) asparagine). A helical transmembrane segment spans residues 173–193; it reads GILSLVVSLVLSSSLQFIINV. The Cytoplasmic portion of the chain corresponds to 194 to 230; sequence TSASLLIHSLRRHIQKMQKNATGFWNPQTEAHVGAMK. A helical membrane pass occupies residues 231–251; it reads LMVYFLILYIPYSVATLVQYL. The Extracellular portion of the chain corresponds to 252-262; sequence PFYAGMDMGTK. A helical transmembrane segment spans residues 263-283; that stretch reads SICLIFATLYSPGHSVLIIIT. At 284–299 the chain is on the cytoplasmic side; the sequence is HPKLKTTAKKILCFKK.

Belongs to the G-protein coupled receptor T2R family.

The protein resides in the membrane. The protein localises to the cell projection. It localises to the cilium membrane. Gustducin-coupled receptor implicated in the perception of bitter compounds in the oral cavity and the gastrointestinal tract. Signals through PLCB2 and the calcium-regulated cation channel TRPM5. In airway epithelial cells, binding of denatonium increases the intracellular calcium ion concentration and stimulates ciliary beat frequency. This Pan troglodytes (Chimpanzee) protein is Taste receptor type 2 member 4 (TAS2R4).